A 425-amino-acid polypeptide reads, in one-letter code: Protein upregulated in glial subsets pugs-5 (425 aa).

The span at 355-373 (NNNDVEKSTQIEKKPEKQG) shows a compositional bias: basic and acidic residues. Residues 355-407 (NNNDVEKSTQIEKKPEKQGPEIQEEVVEMETVKDEQPPKTSAVRFKENSPRLM) are disordered.

The protein is Protein upregulated in glial subsets pugs-5 of Caenorhabditis elegans.